Here is a 161-residue protein sequence, read N- to C-terminus: Nucleotide-binding protein Swoo_3646 (161 aa).

It belongs to the YajQ family.

Its function is as follows. Nucleotide-binding protein. This is Nucleotide-binding protein Swoo_3646 from Shewanella woodyi (strain ATCC 51908 / MS32).